The primary structure comprises 428 residues: MSMLSRRLFSTSRLAAFSKIKVKQPVVELDGDEMTRIIWDKIKKKLILPYLDVDLKYYDLSVESRDATSDKITQDAAEAIKKYGVGIKCATITPDEARVKEFNLHKMWKSPNGTIRNILGGTVFREPIVIPRIPRLVPRWEKPIIIGRHAHGDQYKATDTLIPGPGSLELVYKPSDPTTAQPQTLKVYDYKGSGVAMAMYNTDESIEGFAHSSFKLAIDKKLNLFLSTKNTILKKYDGRFKDIFQEVYEAQYKSKFEQLGIHYEHRLIDDMVAQMIKSKGGFIMALKNYDGDVQSDIVAQGFGSLGLMTSILVTPDGKTFESEAAHGTVTRHYRKYQKGEETSTNSIASIFAWSRGLLKRGELDNTPALCKFANILESATLNTVQQDGIMTKDLALACGNNERSAYVTTEEFLDAVEKRLQKEIKSIE.

The transit peptide at 1 to 16 directs the protein to the mitochondrion; sequence MSMLSRRLFSTSRLAA. NADP(+)-binding positions include 91–93 and Arg-98; that span reads TIT. A substrate-binding site is contributed by Thr-93. Substrate is bound by residues 110–116, Arg-125, and Arg-148; that span reads SPNGTIR. Asp-269 serves as a coordination point for Mn(2+). Lys-277 contributes to the NADP(+) binding site. Asp-292 contributes to the Mn(2+) binding site. Residues 327 to 332 and Asn-345 each bind NADP(+); that span reads GTVTRH.

The protein belongs to the isocitrate and isopropylmalate dehydrogenases family. In terms of assembly, homodimer. Requires Mg(2+) as cofactor. Mn(2+) is required as a cofactor.

It localises to the mitochondrion. The catalysed reaction is D-threo-isocitrate + NADP(+) = 2-oxoglutarate + CO2 + NADPH. Its activity is regulated as follows. The enzyme is subject to end product inhibition by NADPH and 2-oxoglutarate. In terms of biological role, mitochondrial IDP1 may regulate flux through the tricarboxylic acid cycle and respiration. Its probably critical function is the production of NADPH. This is Isocitrate dehydrogenase [NADP], mitochondrial (IDP1) from Saccharomyces cerevisiae (strain ATCC 204508 / S288c) (Baker's yeast).